The chain runs to 340 residues: Glycerol-3-phosphate dehydrogenase [NAD(P)+] (340 aa).

The NADPH site is built by Ser12, Trp13, Lys34, and Lys107. Positions 107, 138, and 140 each coordinate sn-glycerol 3-phosphate. Ala142 lines the NADPH pocket. Sn-glycerol 3-phosphate contacts are provided by Lys193, Asp246, Ser256, Arg257, and Asn258. The Proton acceptor role is filled by Lys193. Arg257 is an NADPH binding site. Ile281 and Glu283 together coordinate NADPH.

Belongs to the NAD-dependent glycerol-3-phosphate dehydrogenase family.

It is found in the cytoplasm. The catalysed reaction is sn-glycerol 3-phosphate + NAD(+) = dihydroxyacetone phosphate + NADH + H(+). The enzyme catalyses sn-glycerol 3-phosphate + NADP(+) = dihydroxyacetone phosphate + NADPH + H(+). It functions in the pathway membrane lipid metabolism; glycerophospholipid metabolism. Its function is as follows. Catalyzes the reduction of the glycolytic intermediate dihydroxyacetone phosphate (DHAP) to sn-glycerol 3-phosphate (G3P), the key precursor for phospholipid synthesis. In Enterococcus faecalis (strain ATCC 700802 / V583), this protein is Glycerol-3-phosphate dehydrogenase [NAD(P)+].